A 98-amino-acid chain; its full sequence is NADH-ubiquinone oxidoreductase chain 4L (98 aa).

3 helical membrane-spanning segments follow: residues methionine 1 to methionine 21, alanine 29 to leucine 49, and isoleucine 61 to valine 81.

The protein belongs to the complex I subunit 4L family. In terms of assembly, core subunit of respiratory chain NADH dehydrogenase (Complex I) which is composed of 45 different subunits.

It is found in the mitochondrion inner membrane. It catalyses the reaction a ubiquinone + NADH + 5 H(+)(in) = a ubiquinol + NAD(+) + 4 H(+)(out). In terms of biological role, core subunit of the mitochondrial membrane respiratory chain NADH dehydrogenase (Complex I) which catalyzes electron transfer from NADH through the respiratory chain, using ubiquinone as an electron acceptor. Part of the enzyme membrane arm which is embedded in the lipid bilayer and involved in proton translocation. The protein is NADH-ubiquinone oxidoreductase chain 4L (MT-ND4L) of Phocoena phocoena (Harbor porpoise).